We begin with the raw amino-acid sequence, 295 residues long: Adrenocorticotropic hormone receptor (295 aa).

Residues methionine 1–alanine 23 lie on the Extracellular side of the membrane. N-linked (GlcNAc...) asparagine glycans are attached at residues asparagine 12 and asparagine 17. 2 disulfide bridges follow: cysteine 21-cysteine 253 and cysteine 245-cysteine 251. Residues valine 24 to valine 49 form a helical membrane-spanning segment. The Cytoplasmic segment spans residues alanine 50–proline 58. The helical transmembrane segment at methionine 59 to leucine 79 threads the bilayer. Topologically, residues glutamate 80–aspartate 104 are extracellular. Residues valine 105–alanine 126 form a helical membrane-spanning segment. The Cytoplasmic segment spans residues aspartate 127–alanine 147. The chain crosses the membrane as a helical span at residues leucine 148–phenylalanine 168. Topologically, residues serine 169–alanine 180 are extracellular. A helical transmembrane segment spans residues leucine 181–leucine 199. Residues alanine 200–glycine 217 are Cytoplasmic-facing. The helical transmembrane segment at alanine 218–phenylalanine 244 threads the bilayer. Residues cysteine 245–serine 256 lie on the Extracellular side of the membrane. The helical transmembrane segment at leucine 257 to phenylalanine 278 threads the bilayer. Residues arginine 279 to tryptophan 295 lie on the Cytoplasmic side of the membrane. Cysteine 293 carries the S-palmitoyl cysteine lipid modification.

Belongs to the G-protein coupled receptor 1 family. In terms of assembly, homodimer. Interacts with corticotropin (ACTH). Interacts with MRAP; this interaction targets MC2R to the plasma membrane. Interacts with MRAP2; competing with MRAP for binding to MC2R and impairing the binding of corticotropin (ACTH). Ubiquitinated by MGRN1 that may be involved in post-endocytic trafficking and/or degradation of internalized receptor.

It localises to the cell membrane. Functionally, hormone receptor primarily expressed in adrenal cortex that plays a key role in regulating adrenocortical function. Upon corticotropin (ACTH) binding, facilitates the release of adrenal glucocorticoids, including cortisol and corticosterone. In addition, MC2R is required for fetal and neonatal adrenal gland development. Mechanistically, activates adenylate cyclase (cAMP), the MAPK cascade as well as the cAMP-dependent protein kinase A pathway leading to steroidogenic factor 1/NR5A1-mediated transcriptional activation. This Ovis aries (Sheep) protein is Adrenocorticotropic hormone receptor (MC2R).